The chain runs to 580 residues: uncharacterized protein (580 aa).

Disordered regions lie at residues 161 to 241 (SFSP…SVND), 256 to 281 (LGSL…SFSD), 325 to 345 (NVSH…QLLK), 472 to 495 (PRDT…DNSD), and 544 to 564 (SAVL…KEVR). A compositionally biased stretch (low complexity) spans 192 to 203 (SNSNSSDTSTDD). Polar residues-rich tracts occupy residues 223–241 (THSS…SVND) and 256–269 (LGSL…TAQK). Residues 326–341 (VSHEEKSHSVQDDKSK) are compositionally biased toward basic and acidic residues. The segment covering 481-495 (PNLSQSGNINSDNSD) has biased composition (polar residues).

This is an uncharacterized protein from Schizosaccharomyces pombe (strain 972 / ATCC 24843) (Fission yeast).